The chain runs to 283 residues: Elongation factor Ts (283 aa).

Positions 79-82 (TDFV) are involved in Mg(2+) ion dislocation from EF-Tu.

Belongs to the EF-Ts family.

Its subcellular location is the cytoplasm. In terms of biological role, associates with the EF-Tu.GDP complex and induces the exchange of GDP to GTP. It remains bound to the aminoacyl-tRNA.EF-Tu.GTP complex up to the GTP hydrolysis stage on the ribosome. The polypeptide is Elongation factor Ts (Shewanella denitrificans (strain OS217 / ATCC BAA-1090 / DSM 15013)).